The chain runs to 156 residues: Ribosome-binding factor A (156 aa).

Over residues 125–138 (RVREGAKHAGDPDP) the composition is skewed to basic and acidic residues. Positions 125 to 156 (RVREGAKHAGDPDPYRVGGAEDTDGDTDGDER) are disordered. Positions 145–156 (EDTDGDTDGDER) are enriched in acidic residues.

This sequence belongs to the RbfA family. As to quaternary structure, monomer. Binds 30S ribosomal subunits, but not 50S ribosomal subunits or 70S ribosomes.

The protein localises to the cytoplasm. In terms of biological role, one of several proteins that assist in the late maturation steps of the functional core of the 30S ribosomal subunit. Associates with free 30S ribosomal subunits (but not with 30S subunits that are part of 70S ribosomes or polysomes). Required for efficient processing of 16S rRNA. May interact with the 5'-terminal helix region of 16S rRNA. The sequence is that of Ribosome-binding factor A from Mycolicibacterium smegmatis (strain ATCC 700084 / mc(2)155) (Mycobacterium smegmatis).